Here is a 229-residue protein sequence, read N- to C-terminus: Peptidase E (229 aa).

Residues serine 120, aspartate 135, and histidine 157 each act as charge relay system in the active site.

Belongs to the peptidase S51 family.

It is found in the cytoplasm. It catalyses the reaction Dipeptidase E catalyzes the hydrolysis of dipeptides Asp-|-Xaa. It does not act on peptides with N-terminal Glu, Asn or Gln, nor does it cleave isoaspartyl peptides.. In terms of biological role, hydrolyzes dipeptides containing N-terminal aspartate residues. May play a role in allowing the cell to use peptide aspartate to spare carbon otherwise required for the synthesis of the aspartate family of amino acids. This Salmonella schwarzengrund (strain CVM19633) protein is Peptidase E.